Here is a 154-residue protein sequence, read N- to C-terminus: UPF0178 protein YaiI (154 aa).

The protein belongs to the UPF0178 family.

In Escherichia coli (strain ATCC 8739 / DSM 1576 / NBRC 3972 / NCIMB 8545 / WDCM 00012 / Crooks), this protein is UPF0178 protein YaiI.